A 51-amino-acid chain; its full sequence is 2,3,4,5-tetrahydropyridine-2,6-dicarboxylate N-succinyltransferase (51 aa).

It belongs to the transferase hexapeptide repeat family. Homotrimer.

It localises to the cytoplasm. The catalysed reaction is (S)-2,3,4,5-tetrahydrodipicolinate + succinyl-CoA + H2O = (S)-2-succinylamino-6-oxoheptanedioate + CoA. The protein operates within amino-acid biosynthesis; L-lysine biosynthesis via DAP pathway; LL-2,6-diaminopimelate from (S)-tetrahydrodipicolinate (succinylase route): step 1/3. In Klebsiella oxytoca, this protein is 2,3,4,5-tetrahydropyridine-2,6-dicarboxylate N-succinyltransferase (dapD).